The sequence spans 494 residues: Glutamate--tRNA ligase (494 aa).

Residues 15–25 (PSPTGNPHVGL) carry the 'HIGH' region motif. Residues cysteine 112, cysteine 114, cysteine 139, and glutamate 141 each coordinate Zn(2+). The 'KMSKS' region motif lies at 260–264 (KLSKR). Lysine 263 provides a ligand contact to ATP.

It belongs to the class-I aminoacyl-tRNA synthetase family. Glutamate--tRNA ligase type 1 subfamily. In terms of assembly, monomer. Requires Zn(2+) as cofactor.

It is found in the cytoplasm. The enzyme catalyses tRNA(Glu) + L-glutamate + ATP = L-glutamyl-tRNA(Glu) + AMP + diphosphate. Its function is as follows. Catalyzes the attachment of glutamate to tRNA(Glu) in a two-step reaction: glutamate is first activated by ATP to form Glu-AMP and then transferred to the acceptor end of tRNA(Glu). This is Glutamate--tRNA ligase from Streptomyces coelicolor (strain ATCC BAA-471 / A3(2) / M145).